The following is a 363-amino-acid chain: 3-isopropylmalate dehydrogenase (363 aa).

78–91 (GPKWEHLPPDQQPE) provides a ligand contact to NAD(+). Arg99, Arg109, Arg138, and Asp227 together coordinate substrate. Asp227, Asp251, and Asp255 together coordinate Mg(2+). 285–297 (GSAPDIAGKNIAN) contacts NAD(+).

It belongs to the isocitrate and isopropylmalate dehydrogenases family. LeuB type 1 subfamily. Homodimer. The cofactor is Mg(2+). Mn(2+) serves as cofactor.

The protein localises to the cytoplasm. The enzyme catalyses (2R,3S)-3-isopropylmalate + NAD(+) = 4-methyl-2-oxopentanoate + CO2 + NADH. It functions in the pathway amino-acid biosynthesis; L-leucine biosynthesis; L-leucine from 3-methyl-2-oxobutanoate: step 3/4. Functionally, catalyzes the oxidation of 3-carboxy-2-hydroxy-4-methylpentanoate (3-isopropylmalate) to 3-carboxy-4-methyl-2-oxopentanoate. The product decarboxylates to 4-methyl-2 oxopentanoate. The sequence is that of 3-isopropylmalate dehydrogenase from Shigella flexneri.